A 711-amino-acid polypeptide reads, in one-letter code: Polyribonucleotide nucleotidyltransferase (711 aa).

The Mg(2+) site is built by D487 and D493. Positions 554 to 613 (PRIHTMKISAEKIKDVIGKGGAVIRALTEETGTTIEIEDDGTIKIAATEGAAAKEAIRRI) constitute a KH domain. The S1 motif domain maps to 623–691 (GRIYTGKVAR…RQGRVRLSMK (69 aa)). A disordered region spans residues 691 to 711 (KEAVEKPAEEAAAEAPAAKEE).

The protein belongs to the polyribonucleotide nucleotidyltransferase family. As to quaternary structure, component of the RNA degradosome, which is a multiprotein complex involved in RNA processing and mRNA degradation. Mg(2+) serves as cofactor.

The protein resides in the cytoplasm. The catalysed reaction is RNA(n+1) + phosphate = RNA(n) + a ribonucleoside 5'-diphosphate. Its function is as follows. Involved in mRNA degradation. Catalyzes the phosphorolysis of single-stranded polyribonucleotides processively in the 3'- to 5'-direction. This is Polyribonucleotide nucleotidyltransferase from Vibrio parahaemolyticus serotype O3:K6 (strain RIMD 2210633).